A 178-amino-acid chain; its full sequence is Cell division protein SepF (178 aa).

Basic and acidic residues predominate over residues 19–45; the sequence is EHYESEHHTPHKDEDDSMEHDREERRA. Residues 19–65 are disordered; it reads EHYESEHHTPHKDEDDSMEHDREERRAPAPVREIARETPTPHAAEEE.

This sequence belongs to the SepF family. Homodimer. Interacts with FtsZ.

It is found in the cytoplasm. Cell division protein that is part of the divisome complex and is recruited early to the Z-ring. Probably stimulates Z-ring formation, perhaps through the cross-linking of FtsZ protofilaments. Its function overlaps with FtsA. This is Cell division protein SepF from Arthrobacter sp. (strain FB24).